The chain runs to 330 residues: Polyprenyl transferase dpfgC (330 aa).

Asn34 carries N-linked (GlcNAc...) asparagine glycosylation. The next 7 helical transmembrane spans lie at 105–125, 146–166, 175–192, 199–219, 237–257, 273–293, and 310–330; these read ALCV…NDWI, VTTT…WGVL, VLKH…YPFG, KLMI…AIPG, CLPL…AYSY, NIAG…IILA, and NFIL…LTSA.

It belongs to the UbiA prenyltransferase family. The cofactor is Mg(2+).

The protein resides in the membrane. It participates in secondary metabolite biosynthesis; terpenoid biosynthesis. Functionally, polyprenyl transferase; part of the gene cluster that mediates the biosynthesis of diterpenoid pyrones. The first step of the pathway is the synthesis of the alpha-pyrone moiety by the polyketide synthase dpfgA via condensation of one acetyl-CoA starter unit with 3 malonyl-CoA units and 2 methylations. The alpha-pyrone is then combined with geranylgeranyl pyrophosphate (GGPP) formed by the GGPP synthase dpfgD through the action of the prenyltransferase dpfgC to yield a linear alpha-pyrone diterpenoid. Subsequent steps in the diterpenoid pyrone biosynthetic pathway involve the decalin core formation, which is initiated by the epoxidation of the C10-C11 olefin by the FAD-dependent oxidoreductase dpfgE, and is followed by a cyclization cascade catalyzed by the terpene cyclase dpfgB. The short chain dehydrogenase/reductase dpfgG then oxidizes the 8S hydroxy group to a ketone and the short chain dehydrogenase/reductase dpfgH reduces the ketone to the 8R hydroxy group to yield higginsianin B. Higginsianin B is further methylated by the methyltransferase dpfgI to produce the intermediate named FDDP B. The cytochrome P450 monooxygenase dfgpJ then catalyzes a three-step oxidation at C-27 to generate a carboxylic acid as well as C-26 hydroxylation. Finally, methyltransferase dpfgK methylates the carboxylic acid generated by dpfgJ, yielding the final diterpenoid pyrones from the pathway which were named FDDP D and FDDP E. This chain is Polyprenyl transferase dpfgC, found in Gibberella zeae (strain ATCC MYA-4620 / CBS 123657 / FGSC 9075 / NRRL 31084 / PH-1) (Wheat head blight fungus).